The following is a 126-amino-acid chain: Histone H2B type 1-H (126 aa).

Low complexity predominate over residues 1–12 (MPDPAKSAPAPK). Positions 1 to 36 (MPDPAKSAPAPKKGSKKAVTKAQKKDGKKRKRSRKE) are disordered. Proline 2 bears the N-acetylproline mark. The residue at position 6 (lysine 6) is an N6-(2-hydroxyisobutyryl)lysine; alternate. Lysine 6 is modified (N6-(beta-hydroxybutyryl)lysine; alternate). Lysine 6 carries the N6-acetyllysine; alternate modification. At lysine 6 the chain carries N6-butyryllysine; alternate. At lysine 6 the chain carries N6-crotonyllysine; alternate. Lysine 6 carries the post-translational modification N6-lactoyllysine; alternate. Residue lysine 6 forms a Glycyl lysine isopeptide (Lys-Gly) (interchain with G-Cter in SUMO2); alternate linkage. Residue serine 7 is modified to ADP-ribosylserine. Lysine 12 bears the N6-(beta-hydroxybutyryl)lysine; alternate mark. 2 positions are modified to N6-acetyllysine; alternate: lysine 12 and lysine 13. Lysine 12 and lysine 13 each carry N6-crotonyllysine; alternate. At lysine 12 the chain carries N6-lactoyllysine; alternate. Lysine 13 is subject to N6-(2-hydroxyisobutyryl)lysine; alternate. Serine 15 carries the phosphoserine; by STK4/MST1 modification. Residues lysine 16, lysine 17, lysine 21, and lysine 24 each carry the N6-acetyllysine; alternate modification. An N6-crotonyllysine; alternate mark is found at lysine 16, lysine 17, lysine 21, and lysine 24. An N6-lactoyllysine; alternate mark is found at lysine 16, lysine 17, lysine 21, and lysine 24. N6-(beta-hydroxybutyryl)lysine; alternate is present on residues lysine 17 and lysine 21. Position 17 is an N6-glutaryllysine; alternate (lysine 17). N6-(2-hydroxyisobutyryl)lysine; alternate occurs at positions 21 and 24. Position 21 is an N6-butyryllysine; alternate (lysine 21). Residue lysine 21 forms a Glycyl lysine isopeptide (Lys-Gly) (interchain with G-Cter in SUMO2); alternate linkage. Lysine 25 carries the post-translational modification N6-(2-hydroxyisobutyryl)lysine. N6-(2-hydroxyisobutyryl)lysine; alternate is present on lysine 35. Lysine 35 is subject to N6-(beta-hydroxybutyryl)lysine; alternate. Residue lysine 35 is modified to N6-crotonyllysine; alternate. Lysine 35 bears the N6-glutaryllysine; alternate mark. Lysine 35 bears the N6-succinyllysine; alternate mark. A Glycyl lysine isopeptide (Lys-Gly) (interchain with G-Cter in ubiquitin); alternate cross-link involves residue lysine 35. Glutamate 36 is modified (polyADP-ribosyl glutamic acid). Residue serine 37 is modified to Phosphoserine; by AMPK. 3 positions are modified to N6-(2-hydroxyisobutyryl)lysine; alternate: lysine 44, lysine 47, and lysine 58. Lysine 44 is subject to N6-lactoyllysine; alternate. An N6-glutaryllysine; alternate mark is found at lysine 44 and lysine 47. An N6-methyllysine; alternate modification is found at lysine 47. Residue lysine 58 is modified to N6,N6-dimethyllysine; alternate. The residue at position 80 (arginine 80) is a Dimethylated arginine. Residue lysine 86 is modified to N6-(2-hydroxyisobutyryl)lysine; alternate. Lysine 86 carries the N6-(beta-hydroxybutyryl)lysine; alternate modification. Lysine 86 carries the post-translational modification N6-acetyllysine; alternate. Lysine 86 bears the N6-lactoyllysine; alternate mark. Lysine 86 is subject to N6,N6,N6-trimethyllysine; alternate. 2 positions are modified to omega-N-methylarginine: arginine 87 and arginine 93. Lysine 109 is subject to N6-(2-hydroxyisobutyryl)lysine; alternate. Lysine 109 is subject to N6-lactoyllysine; alternate. At lysine 109 the chain carries N6-glutaryllysine; alternate. An N6-methyllysine; alternate modification is found at lysine 109. Residue serine 113 is glycosylated (O-linked (GlcNAc) serine). Threonine 116 carries the phosphothreonine modification. Lysine 117 and lysine 121 each carry N6-(2-hydroxyisobutyryl)lysine; alternate. 2 positions are modified to N6-(beta-hydroxybutyryl)lysine; alternate: lysine 117 and lysine 121. N6-lactoyllysine; alternate is present on residues lysine 117 and lysine 121. 2 positions are modified to N6-glutaryllysine; alternate: lysine 117 and lysine 121. An N6-succinyllysine; alternate mark is found at lysine 117 and lysine 121. The residue at position 117 (lysine 117) is an N6-malonyllysine; alternate. The residue at position 117 (lysine 117) is an N6-methylated lysine; alternate. A Glycyl lysine isopeptide (Lys-Gly) (interchain with G-Cter in ubiquitin); alternate cross-link involves residue lysine 121.

It belongs to the histone H2B family. In terms of assembly, the nucleosome is a histone octamer containing two molecules each of H2A, H2B, H3 and H4 assembled in one H3-H4 heterotetramer and two H2A-H2B heterodimers. The octamer wraps approximately 147 bp of DNA. Found in a complex with PPAR9; DTX3L AND STAT1; the interaction is likely to induce DTX3L-mediated ubiquitination of H2BC9/H2BJ. Monoubiquitination at Lys-35 (H2BK34Ub) by the MSL1/MSL2 dimer is required for histone H3 'Lys-4' (H3K4me) and 'Lys-79' (H3K79me) methylation and transcription activation at specific gene loci, such as HOXA9 and MEIS1 loci. Similarly, monoubiquitination at Lys-121 (H2BK120Ub) by the RNF20/40 complex gives a specific tag for epigenetic transcriptional activation and is also prerequisite for histone H3 'Lys-4' and 'Lys-79' methylation. It also functions cooperatively with the FACT dimer to stimulate elongation by RNA polymerase II. H2BK120Ub also acts as a regulator of mRNA splicing: deubiquitination by USP49 is required for efficient cotranscriptional splicing of a large set of exons. Monoubiquitinated by DTX3L upon encephalomyocarditis virus (EMCV)-mediated infection. In terms of processing, phosphorylation at Ser-37 (H2BS36ph) by AMPK in response to stress promotes transcription. Phosphorylated on Ser-15 (H2BS14ph) by STK4/MST1 during apoptosis; which facilitates apoptotic chromatin condensation. Also phosphorylated on Ser-15 in response to DNA double strand breaks (DSBs), and in correlation with somatic hypermutation and immunoglobulin class-switch recombination. Post-translationally, glcNAcylation at Ser-113 promotes monoubiquitination of Lys-121. It fluctuates in response to extracellular glucose, and associates with transcribed genes. ADP-ribosylated by PARP1 or PARP2 on Ser-7 (H2BS6ADPr) in response to DNA damage. H2BS6ADPr promotes recruitment of CHD1L. Poly ADP-ribosylation on Glu-36 (H2BE35ADPr) by PARP1 regulates adipogenesis: it inhibits phosphorylation at Ser-37 (H2BS36ph), thereby blocking expression of pro-adipogenetic genes. In terms of processing, crotonylation (Kcr) is specifically present in male germ cells and marks testis-specific genes in post-meiotic cells, including X-linked genes that escape sex chromosome inactivation in haploid cells. Crotonylation marks active promoters and enhancers and confers resistance to transcriptional repressors. It is also associated with post-meiotically activated genes on autosomes. Post-translationally, lactylated in macrophages by EP300/P300 by using lactoyl-CoA directly derived from endogenous or exogenous lactate, leading to stimulates gene transcription.

Its subcellular location is the nucleus. It is found in the chromosome. Functionally, core component of nucleosome. Nucleosomes wrap and compact DNA into chromatin, limiting DNA accessibility to the cellular machineries which require DNA as a template. Histones thereby play a central role in transcription regulation, DNA repair, DNA replication and chromosomal stability. DNA accessibility is regulated via a complex set of post-translational modifications of histones, also called histone code, and nucleosome remodeling. The protein is Histone H2B type 1-H of Homo sapiens (Human).